We begin with the raw amino-acid sequence, 225 residues long: Suppressor of cytokine signaling 3 (225 aa).

Residues 22–33 (LKTFSSKSEYQL) are kinase inhibitory region (KIR). The extended SH2 subdomain (ESS) stretch occupies residues 34 to 45 (VVNAVRKLQESG). Positions 46–142 (FYWSAVTGGE…TPSFSLPPTE (97 aa)) constitute an SH2 domain. A disordered region spans residues 131–160 (PGTPSFSLPPTEPSSEVPEQPPAQALPGST). The SOCS box domain occupies 177–224 (VLSRPLSSNVATLQHLCRKTVNGHLDSYEKVTQLPGPIREFLDQYDAP).

Interacts with multiple activated proteins of the tyrosine kinase signaling pathway including IGF1 receptor, insulin receptor and JAK2. Binding to JAK2 is mediated through the KIR and SH2 domains to a phosphorylated tyrosine residue within the JAK2 JH1 domain. Binds specific activated tyrosine residues of the leptin, EPO, IL12, GSCF and gp130 receptors. Interaction with CSNK1E stabilizes SOCS3 protein. Component of the probable ECS(SOCS3) E3 ubiquitin-protein ligase complex which contains CUL5, RNF7/RBX2, elongin BC complex and SOCS3. Interacts with CUL5, RNF7, ELOB and ELOC. Interacts with FGFR3. Interacts with INSR. Interacts with BCL10; this interaction may interfere with BCL10-binding with PELI2. Interacts with NOD2 (via CARD domain); the interaction promotes NOD2 degradation. In terms of processing, phosphorylated on tyrosine residues after stimulation by the cytokines, IL-2, EPO or IGF1. In terms of tissue distribution, low expression in lung, spleen and thymus. Expressed in Th2 but not TH1 cells.

The protein operates within protein modification; protein ubiquitination. Functionally, SOCS family proteins form part of a classical negative feedback system that regulates cytokine signal transduction. SOCS3 is involved in negative regulation of cytokines that signal through the JAK/STAT pathway. Inhibits cytokine signal transduction by binding to tyrosine kinase receptors including IL6ST/gp130, LIF, erythropoietin, insulin, IL12, GCSF and leptin receptors. Binding to JAK2 inhibits its kinase activity and regulates IL6 signaling. Suppresses fetal liver erythropoiesis. Regulates onset and maintenance of allergic responses mediated by T-helper type 2 cells. Probable substrate recognition component of a SCF-like ECS (Elongin BC-CUL2/5-SOCS-box protein) E3 ubiquitin-protein ligase complex which mediates the ubiquitination and subsequent proteasomal degradation of target proteins. This is Suppressor of cytokine signaling 3 from Mus musculus (Mouse).